Consider the following 154-residue polypeptide: Myoglobin (154 aa).

The Globin domain occupies 2 to 148 (GLSEAEWQLV…FRKDIAAKYK (147 aa)). Serine 4 is modified (phosphoserine). Histidine 65 contributes to the nitrite binding site. An O2-binding site is contributed by histidine 65. Residue threonine 68 is modified to Phosphothreonine. Position 94 (histidine 94) interacts with heme b.

This sequence belongs to the globin family. Monomeric.

The protein resides in the cytoplasm. It is found in the sarcoplasm. The enzyme catalyses Fe(III)-heme b-[protein] + nitric oxide + H2O = Fe(II)-heme b-[protein] + nitrite + 2 H(+). It catalyses the reaction H2O2 + AH2 = A + 2 H2O. In terms of biological role, monomeric heme protein which primary function is to store oxygen and facilitate its diffusion within muscle tissues. Reversibly binds oxygen through a pentacoordinated heme iron and enables its timely and efficient release as needed during periods of heightened demand. Depending on the oxidative conditions of tissues and cells, and in addition to its ability to bind oxygen, it also has a nitrite reductase activity whereby it regulates the production of bioactive nitric oxide. Under stress conditions, like hypoxia and anoxia, it also protects cells against reactive oxygen species thanks to its pseudoperoxidase activity. In Ziphius cavirostris (Cuvier's beaked whale), this protein is Myoglobin (MB).